Consider the following 189-residue polypeptide: Elongation factor P (189 aa).

Belongs to the elongation factor P family.

The protein resides in the cytoplasm. Its pathway is protein biosynthesis; polypeptide chain elongation. Functionally, involved in peptide bond synthesis. Stimulates efficient translation and peptide-bond synthesis on native or reconstituted 70S ribosomes in vitro. Probably functions indirectly by altering the affinity of the ribosome for aminoacyl-tRNA, thus increasing their reactivity as acceptors for peptidyl transferase. The protein is Elongation factor P of Sinorhizobium medicae (strain WSM419) (Ensifer medicae).